The following is a 413-amino-acid chain: Putative competence-damage inducible protein (413 aa).

It belongs to the CinA family.

The polypeptide is Putative competence-damage inducible protein (Alkaliphilus oremlandii (strain OhILAs) (Clostridium oremlandii (strain OhILAs))).